We begin with the raw amino-acid sequence, 714 residues long: MADRVNASQGAAAAPTANGPGGVRNVVLVGPSGGGKTTLIEALLVAAKVLSRPGSVTEGTTVCDFDEAEIRQQRSVGLAVASLAYDGIKVNLVDTPGYADFVGELRAGLRAADCALFVIAANEGVDEPTKSLWQECSQVGMPRAVVITKLDHARANYREALTAAQDAFGDKVLPLYLPSGDGLIGLLSQALYEYADGKRTTRTPAESDTERIEEARGALIEGIIEESEDESLMERYLGGETIDESVLIQDLEKAVARGSFFPVIPVCSSTGVGTLELLEVATRGFPSPMEHPLPEVFTPQGVPHAELACDNDAPLLAEVVKTTSDPYVGRVSLVRVFSGTIRPDTTVHVSGHFSSFFGGGTSNTHPDHDEDERIGVLSFPLGKQQRPAAAVVAGDICAIGKLSRAETGDTLSDKAEPLVLKPWTMPEPLLPIAIAAHAKTDEDKLSVGLGRLAAEDPTLRIEQNQETHQVVLWCMGEAHAGVVLDTLANRYGVSVDTIELRVPLRETFAGNAKGHGRHIKQSGGHGQYGVCDIEVEPLPEGSGFEFLDKVVGGAVPRQFIPSVEKGVRAQMDKGVHAGYPVVDIRVTLLDGKAHSVDSSDFAFQMAGALALREAAAATKVILLEPIDEISVLVPDDFVGAVLGDLSSRRGRVLGTETAGHDRTVIKAEVPQVELTRYAIDLRSLAHGAASFTRSFARYEPMPESAAARVKAGAG.

A tr-type G domain is found at 21–289; that stretch reads GGVRNVVLVG…VATRGFPSPM (269 aa). Residues 30–37 form a G1 region; sequence GPSGGGKT. 30–37 is a GTP binding site; it reads GPSGGGKT. The tract at residues 73 to 77 is G2; it reads QRSVG. A G3 region spans residues 94–97; it reads DTPG. GTP is bound by residues 94–98 and 148–151; these read DTPGY and TKLD. A G4 region spans residues 148 to 151; that stretch reads TKLD. The interval 267–269 is G5; it reads CSS.

The protein belongs to the TRAFAC class translation factor GTPase superfamily. Classic translation factor GTPase family. EF-G/EF-2 subfamily.

The polypeptide is Elongation factor G-like protein (Mycobacterium tuberculosis (strain CDC 1551 / Oshkosh)).